The primary structure comprises 182 residues: Gremlin-1 (182 aa).

The first 24 residues, M1–G24, serve as a signal peptide directing secretion. The segment at E23–A65 is disordered. N44 carries N-linked (GlcNAc...) asparagine glycosylation. Cystine bridges form between C92–C142, C106–C156, C116–C174, and C120–C176. The CTCK domain occupies C92–D182.

Belongs to the DAN family.

It localises to the secreted. In terms of biological role, cytokine that has an axial patterning activity. Acts like BMP antagonist in embryonic explants. Blocks the BMP2 activity. The sequence is that of Gremlin-1 (grem1) from Xenopus laevis (African clawed frog).